The chain runs to 3987 residues: Hybrid PKS-NRPS synthetase buaA (3987 aa).

The Ketosynthase family 3 (KS3) domain maps to 5 to 438 (NEPIAIVGSG…GANAHAIVES (434 aa)). Active-site for beta-ketoacyl synthase activity residues include cysteine 176, histidine 315, and histidine 358. Residues 546–872 (VFTGQGAQWP…RNADDVESFS (327 aa)) form a malonyl-CoA:ACP transacylase (MAT) domain region. Residues 939-1072 (HELLGVRVDS…GAVRLQLGAA (134 aa)) form an N-terminal hotdog fold region. The PKS/mFAS DH domain maps to 939–1240 (HELLGVRVDS…VAPLVPVTQS (302 aa)). The dehydratase (DH) domain stretch occupies residues 940-1238 (ELLGVRVDSL…LQVAPLVPVT (299 aa)). The active-site Proton acceptor; for dehydratase activity is histidine 970. The C-terminal hotdog fold stretch occupies residues 1087 to 1240 (MNDVNIEHFY…VAPLVPVTQS (154 aa)). Aspartate 1147 serves as the catalytic Proton donor; for dehydratase activity. The interval 1399–1583 (YLANLVKQLS…TSTPSHDVFM (185 aa)) is methyltransferase (MT) domain. Residues 2113–2285 (TYLLVGLTGE…LPGSVMNLAG (173 aa)) form a ketoreductase (KR) domain region. The 77-residue stretch at 2397-2473 (RVLTNGLILT…AMVEDTMERM (77 aa)) folds into the Carrier 1 domain. An O-(pantetheine 4'-phosphoryl)serine modification is found at serine 2433. Residues 2489–2561 (AADRPSAPSD…PPPSSVMSED (73 aa)) form a disordered region. Positions 2514-2525 (HNSEEQESHAME) are enriched in basic and acidic residues. Residues 2532–2550 (STTSGGECSSTKESSSSEA) are compositionally biased toward low complexity. The condensation (C) domain stretch occupies residues 2582 to 3001 (MGYGSLQFFF…QLVKMCAYME (420 aa)). Residues 3042–3448 (LDVAQARPEA…GQLYYEGRIA (407 aa)) form an adenylation (A) (KR) domain region. The Carrier 2 domain occupies 3564–3644 (ADLSETELAL…AMALKIRNSQ (81 aa)). At serine 3604 the chain carries O-(pantetheine 4'-phosphoryl)serine. The reductase (R) domain stretch occupies residues 3680-3916 (TVVLTGATGY…TGIAAAAVGA (237 aa)).

In the C-terminal section; belongs to the NRP synthetase family.

It functions in the pathway mycotoxin biosynthesis. Functionally, hybrid PKS-NRPS synthetase; part of the gene cluster that mediates the biosynthesis of burnettramic acids, an unusual class of bolaamphiphilic pyrrolizidinediones that display potent antibacterial, antifungal, and cytotoxic activities. The first step of the biosynthesis of burnettramic acids is the hydroxylation of proline by the proline hydroxylase buaE to generate 4-hydroxyproline. The PKS-NRPS buaA and trans-enoyl reductase buaC construct the highly reduced polyketide chain, and the condensation (C) domain of buaA then catalyzes the amide bond formation with the activated 4-hydroxyproline. This is followed by the R domain releasing the nascent polyketide-peptide directly via a Dieckmann condensation to afford a tetramic acid fused to the hydroxyproline, generating the bicyclic pyrrolidinedione moiety. The cytochrome P450 monooxygenases buaD and buaG are likely responsible for the multiple hydroxylations on the polyketide chain and its terminus, although in a heterologous context, buaD does not appear to be required. Therefore, while buaG may be a multifunctional cytochrome P450 monooxygenase, it cannot be ruled out that the two secondary alcohols on the polyketide chain could have an acetate origin. Finally, the glycosyltransferase buaB transfers beta-D-mannose to the aglycone burnettramic acid A to form burnettramic acid A. Burnettramic acid B is a minor cis-pyrrolizidine epimer of burnettramic acid A and it is likely that small amounts of it form naturally in acidic environments. The polypeptide is Hybrid PKS-NRPS synthetase buaA (Petromyces alliaceus (Aspergillus alliaceus)).